The following is a 132-amino-acid chain: Glycerol-3-phosphate cytidylyltransferase (132 aa).

CTP-binding positions include 9 to 10 and 14 to 17; these read TY and HYGH. K44 contacts substrate. K46 contacts CTP. K77 contacts substrate. CTP is bound at residue 113–120; the sequence is RTEGISTT.

It belongs to the cytidylyltransferase family. In terms of assembly, homotetramer or homodimer.

It is found in the cytoplasm. It catalyses the reaction sn-glycerol 3-phosphate + CTP + H(+) = CDP-glycerol + diphosphate. The protein operates within cell wall biogenesis; poly(ribitol phosphate) teichoic acid biosynthesis. Its function is as follows. Catalyzes the transfer of the cytidylyl group of CTP to sn-glycerol 3-phosphate so the activated glycerol 3-phosphate can be used for teichoic acid synthesis, via incorporation into both the linkage unit by TarB and TarF. This Staphylococcus aureus (strain NCTC 8325 / PS 47) protein is Glycerol-3-phosphate cytidylyltransferase.